A 598-amino-acid polypeptide reads, in one-letter code: Aluminum-activated malate transporter 9 (598 aa).

The next 6 membrane-spanning stretches (helical) occupy residues 88–108, 117–137, 144–164, 170–190, 194–214, and 227–247; these read IVFS…IFYQ, YSVW…GATL, ALGT…STLF, IFCT…KLYP, AYEY…ISGF, and FLLI…IYPI.

Belongs to the aromatic acid exporter (TC 2.A.85) family. As to expression, expressed in hypocotyls, leaves, roots, flowers, sepals and stamina. In leaves, expressed almost exclusively in mesophyll cells.

Its subcellular location is the vacuole membrane. With respect to regulation, slow activation by external aluminum. Vacuolar malate channel. Has a higher selectivity for malate than for fumarate. Also exhibits a weak chloride conductance. This Arabidopsis thaliana (Mouse-ear cress) protein is Aluminum-activated malate transporter 9 (ALMT9).